The chain runs to 317 residues: Coproporphyrinogen-III oxidase, aerobic 1 (317 aa).

An important for dimerization region spans residues 38–47 (VLRDGAIFEQ). S82 lines the substrate pocket. The active-site Proton donor is the H96. Residues 98 to 100 (NYR) and 269 to 274 (NGRTES) contribute to the substrate site. Residues 251–286 (YVEFNLVYDRGTIFGLQTNGRTESILMSLPPLVRWE) form an important for dimerization region.

The protein belongs to the aerobic coproporphyrinogen-III oxidase family. In terms of assembly, homodimer.

It is found in the cytoplasm. The enzyme catalyses coproporphyrinogen III + O2 + 2 H(+) = protoporphyrinogen IX + 2 CO2 + 2 H2O. It participates in porphyrin-containing compound metabolism; protoporphyrin-IX biosynthesis; protoporphyrinogen-IX from coproporphyrinogen-III (O2 route): step 1/1. In terms of biological role, key enzyme in heme biosynthesis. Catalyzes the oxidative decarboxylation of propionic acid side chains of rings A and B of coproporphyrinogen III. The sequence is that of Coproporphyrinogen-III oxidase, aerobic 1 from Nostoc sp. (strain PCC 7120 / SAG 25.82 / UTEX 2576).